A 510-amino-acid polypeptide reads, in one-letter code: UDP-N-acetylmuramoylalanine--D-glutamate ligase (510 aa).

138 to 144 (GTNGKTT) contacts ATP. The segment at 294–316 (FDEPAPAPRRKKDAPPPTRAGGR) is disordered.

The protein belongs to the MurCDEF family.

Its subcellular location is the cytoplasm. The catalysed reaction is UDP-N-acetyl-alpha-D-muramoyl-L-alanine + D-glutamate + ATP = UDP-N-acetyl-alpha-D-muramoyl-L-alanyl-D-glutamate + ADP + phosphate + H(+). Its pathway is cell wall biogenesis; peptidoglycan biosynthesis. In terms of biological role, cell wall formation. Catalyzes the addition of glutamate to the nucleotide precursor UDP-N-acetylmuramoyl-L-alanine (UMA). The protein is UDP-N-acetylmuramoylalanine--D-glutamate ligase of Bordetella pertussis (strain Tohama I / ATCC BAA-589 / NCTC 13251).